The following is a 442-amino-acid chain: Tubulin beta chain (442 aa).

8 residues coordinate GTP: glutamine 11, glutamate 69, serine 138, glycine 142, threonine 143, glycine 144, asparagine 204, and asparagine 226. Mg(2+) is bound at residue glutamate 69.

It belongs to the tubulin family. In terms of assembly, dimer of alpha and beta chains. A typical microtubule is a hollow water-filled tube with an outer diameter of 25 nm and an inner diameter of 15 nM. Alpha-beta heterodimers associate head-to-tail to form protofilaments running lengthwise along the microtubule wall with the beta-tubulin subunit facing the microtubule plus end conferring a structural polarity. Microtubules usually have 13 protofilaments but different protofilament numbers can be found in some organisms and specialized cells. Mg(2+) is required as a cofactor.

Its subcellular location is the cytoplasm. It localises to the cytoskeleton. Tubulin is the major constituent of microtubules, a cylinder consisting of laterally associated linear protofilaments composed of alpha- and beta-tubulin heterodimers. Microtubules grow by the addition of GTP-tubulin dimers to the microtubule end, where a stabilizing cap forms. Below the cap, tubulin dimers are in GDP-bound state, owing to GTPase activity of alpha-tubulin. In Paramecium tetraurelia, this protein is Tubulin beta chain (bPT2).